The primary structure comprises 34 residues: Photosystem II reaction center protein M (34 aa).

Residues 5–25 traverse the membrane as a helical segment; the sequence is ILGLIATALFIIIPTSFLLIL.

This sequence belongs to the PsbM family. PSII is composed of 1 copy each of membrane proteins PsbA, PsbB, PsbC, PsbD, PsbE, PsbF, PsbH, PsbI, PsbJ, PsbK, PsbL, PsbM, PsbT, PsbX, PsbY, PsbZ, Psb30/Ycf12, at least 3 peripheral proteins of the oxygen-evolving complex and a large number of cofactors. It forms dimeric complexes.

Its subcellular location is the plastid. It is found in the chloroplast thylakoid membrane. Functionally, one of the components of the core complex of photosystem II (PSII). PSII is a light-driven water:plastoquinone oxidoreductase that uses light energy to abstract electrons from H(2)O, generating O(2) and a proton gradient subsequently used for ATP formation. It consists of a core antenna complex that captures photons, and an electron transfer chain that converts photonic excitation into a charge separation. This subunit is found at the monomer-monomer interface. The sequence is that of Photosystem II reaction center protein M from Nephroselmis olivacea (Green alga).